Here is a 184-residue protein sequence, read N- to C-terminus: ATP synthase subunit b 1 (184 aa).

Residues 4-24 form a helical membrane-spanning segment; it reads LSILAVLAASPAMAATGPFLS.

It belongs to the ATPase B chain family. F-type ATPases have 2 components, F(1) - the catalytic core - and F(0) - the membrane proton channel. F(1) has five subunits: alpha(3), beta(3), gamma(1), delta(1), epsilon(1). F(0) has three main subunits: a(1), b(2) and c(10-14). The alpha and beta chains form an alternating ring which encloses part of the gamma chain. F(1) is attached to F(0) by a central stalk formed by the gamma and epsilon chains, while a peripheral stalk is formed by the delta and b chains.

Its subcellular location is the cell inner membrane. In terms of biological role, f(1)F(0) ATP synthase produces ATP from ADP in the presence of a proton or sodium gradient. F-type ATPases consist of two structural domains, F(1) containing the extramembraneous catalytic core and F(0) containing the membrane proton channel, linked together by a central stalk and a peripheral stalk. During catalysis, ATP synthesis in the catalytic domain of F(1) is coupled via a rotary mechanism of the central stalk subunits to proton translocation. Functionally, component of the F(0) channel, it forms part of the peripheral stalk, linking F(1) to F(0). The sequence is that of ATP synthase subunit b 1 from Cereibacter sphaeroides (strain ATCC 17023 / DSM 158 / JCM 6121 / CCUG 31486 / LMG 2827 / NBRC 12203 / NCIMB 8253 / ATH 2.4.1.) (Rhodobacter sphaeroides).